The chain runs to 148 residues: Large ribosomal subunit protein bL9 (148 aa).

Belongs to the bacterial ribosomal protein bL9 family.

Its function is as follows. Binds to the 23S rRNA. This is Large ribosomal subunit protein bL9 from Hydrogenobaculum sp. (strain Y04AAS1).